Here is a 390-residue protein sequence, read N- to C-terminus: Flagellar P-ring protein (390 aa).

The signal sequence occupies residues 1–25 (MLLKKIFLTGIIVLDLVFFVSYGFA).

This sequence belongs to the FlgI family. As to quaternary structure, the basal body constitutes a major portion of the flagellar organelle and consists of four rings (L,P,S, and M) mounted on a central rod.

The protein localises to the periplasm. Its subcellular location is the bacterial flagellum basal body. Functionally, assembles around the rod to form the L-ring and probably protects the motor/basal body from shearing forces during rotation. The polypeptide is Flagellar P-ring protein (Syntrophus aciditrophicus (strain SB)).